A 41-amino-acid polypeptide reads, in one-letter code: Chymotrypsin inhibitor (41 aa).

In terms of biological role, inhibits chymotrypsin. The polypeptide is Chymotrypsin inhibitor (Eisenia hortensis (European nightcrawler)).